A 544-amino-acid polypeptide reads, in one-letter code: Chaperonin GroEL (544 aa).

Residues 30 to 33, Lys-51, 87 to 91, Gly-415, and Asp-495 contribute to the ATP site; these read TLGP and DGTTT.

This sequence belongs to the chaperonin (HSP60) family. Forms a cylinder of 14 subunits composed of two heptameric rings stacked back-to-back. Interacts with the co-chaperonin GroES.

The protein resides in the cytoplasm. The enzyme catalyses ATP + H2O + a folded polypeptide = ADP + phosphate + an unfolded polypeptide.. Functionally, together with its co-chaperonin GroES, plays an essential role in assisting protein folding. The GroEL-GroES system forms a nano-cage that allows encapsulation of the non-native substrate proteins and provides a physical environment optimized to promote and accelerate protein folding. The sequence is that of Chaperonin GroEL from Methylobacillus flagellatus (strain ATCC 51484 / DSM 6875 / VKM B-1610 / KT).